We begin with the raw amino-acid sequence, 366 residues long: Anthranilate phosphoribosyltransferase (366 aa).

Residues Gly103, Gly106 to Asp107, Thr111, Asn113 to Thr116, Lys131 to Ser139, and Gly143 each bind 5-phospho-alpha-D-ribose 1-diphosphate. An anthranilate-binding site is contributed by Gly103. Position 115 (Ser115) interacts with Mg(2+). Asn134 serves as a coordination point for anthranilate. Arg189 is an anthranilate binding site. 2 residues coordinate Mg(2+): Asp247 and Glu248.

The protein belongs to the anthranilate phosphoribosyltransferase family. Homodimer. Mg(2+) is required as a cofactor.

It catalyses the reaction N-(5-phospho-beta-D-ribosyl)anthranilate + diphosphate = 5-phospho-alpha-D-ribose 1-diphosphate + anthranilate. The protein operates within amino-acid biosynthesis; L-tryptophan biosynthesis; L-tryptophan from chorismate: step 2/5. Catalyzes the transfer of the phosphoribosyl group of 5-phosphorylribose-1-pyrophosphate (PRPP) to anthranilate to yield N-(5'-phosphoribosyl)-anthranilate (PRA). The protein is Anthranilate phosphoribosyltransferase of Mycobacterium leprae (strain Br4923).